Here is a 478-residue protein sequence, read N- to C-terminus: Sedoheptulokinase (478 aa).

It belongs to the FGGY kinase family. Strongly expressed in liver, kidney and pancreas. Expressed at lower levels in placenta and heart. Very weakly expressed in lung and brain.

The protein resides in the cytoplasm. It catalyses the reaction sedoheptulose + ATP = D-sedoheptulose 7-phosphate + ADP + H(+). Acts as a modulator of macrophage activation through control of glucose metabolism. This chain is Sedoheptulokinase, found in Homo sapiens (Human).